Here is a 219-residue protein sequence, read N- to C-terminus: ATP-dependent dethiobiotin synthetase BioD (219 aa).

An ATP-binding site is contributed by 12–17; sequence GVGKTI. Thr-16 is a Mg(2+) binding site. Lys-32 is an active-site residue. ATP contacts are provided by residues Asp-43 and 96-99; that span reads ETSG. Residues Asp-43 and Glu-96 each coordinate Mg(2+).

The protein belongs to the dethiobiotin synthetase family. In terms of assembly, homodimer. The cofactor is Mg(2+).

The protein resides in the cytoplasm. It carries out the reaction (7R,8S)-7,8-diammoniononanoate + CO2 + ATP = (4R,5S)-dethiobiotin + ADP + phosphate + 3 H(+). It participates in cofactor biosynthesis; biotin biosynthesis; biotin from 7,8-diaminononanoate: step 1/2. In terms of biological role, catalyzes a mechanistically unusual reaction, the ATP-dependent insertion of CO2 between the N7 and N8 nitrogen atoms of 7,8-diaminopelargonic acid (DAPA, also called 7,8-diammoniononanoate) to form a ureido ring. The chain is ATP-dependent dethiobiotin synthetase BioD from Chlamydia pneumoniae (Chlamydophila pneumoniae).